Here is a 500-residue protein sequence, read N- to C-terminus: Coiled-coil domain-containing protein 125 (500 aa).

A disordered region spans residues 1-105 (MSKVPRSSSE…TDSNSELSDE (105 aa)). Over residues 10–23 (EAEDIWETEDDMTE) the composition is skewed to acidic residues. Over residues 92-101 (RLSSTDSNSE) the composition is skewed to polar residues. 2 coiled-coil regions span residues 101-237 (ELSD…LEAL) and 286-314 (STRKLVLQLRHELETLQKSKEEAHITADA). Residue Ser492 is modified to Phosphoserine.

Expressed in many tissues, with highest levels in spleen, thymus and bone marrow.

The protein localises to the cytoplasm. Functionally, may be involved in the regulation of cell migration. This chain is Coiled-coil domain-containing protein 125 (Ccdc125), found in Mus musculus (Mouse).